Here is a 766-residue protein sequence, read N- to C-terminus: ABC-type oligopeptide transporter ABCB9 (766 aa).

8 helical membrane passes run 7 to 27 (VVVTLAFMSVDICVTTAIYVF), 47 to 67 (VLDLWAACLYRSCLLLGATIG), 84 to 104 (LVITLVCLFVGIYAMVKLLLF), 116 to 136 (FWALFVWTYISLGASFLLWWL), 185 to 205 (VAFLVAASFFLIVAALGETFL), 225 to 245 (FSTAVVIVCLLAIGSSFAAGI), 319 to 339 (VFMFSLSWQLSLVTFMGFPII), and 416 to 436 (SGLTLLVVQVSILYYGGHLVI). In terms of domain architecture, ABC transmembrane type-1 spans 188–471 (LVAASFFLIV…VGSVYSGLMQ (284 aa)). In terms of domain architecture, ABC transporter spans 504 to 740 (VDFENVTFTY…GGLYAKLVQR (237 aa)). Residue 539 to 546 (GPSGSGKS) participates in ATP binding.

It belongs to the ABC transporter superfamily. ABCB family. MHC peptide exporter (TC 3.A.1.209) subfamily. As to quaternary structure, homodimer. Interacts (via TMD0 region) with LAMP1; this interaction strongly stabilizes ABCB9 and protects ABCB9 against lysosomal degradation. Interacts (via TMD0 region) with LAMP2 (isoform LAMP-2B). Interacts (via TMD0) with YIF1B; this interaction allows (but is not essential) the ER-to-Golgi trafficking and strongly depends on a salt bridge within TMD0. In terms of tissue distribution, highly expressed in testis, and at moderate levels in brain, spinal cord, and thyroid. Not expressed in monocytes but strongly expressed during differentiation of monocytes to dendritic cells and macrophages.

The protein localises to the lysosome membrane. It carries out the reaction a [oligopeptide](in) + ATP + H2O = a [oligopeptide](out) + ADP + phosphate + H(+). Its activity is regulated as follows. Transport activity is limited by threshold levels of luminal peptide. ATP hydrolysis is reduced in the presence of the spatial challenging 18-mer peptide by 50% and the branched 16-mer peptide by 75%. Transport rate of the longer peptides is strongly reduced. Its function is as follows. ATP-dependent low-affinity peptide transporter which translocates a broad spectrum of peptides from the cytosol to the lysosomal lumen for degradation. Displays a broad peptide length specificity from 6-mer up to at least 59-mer peptides with an optimum of 23-mers. Binds and transports smaller and larger peptides with the same affinity. Favors positively charged, aromatic or hydrophobic residues in the N- and C-terminal positions whereas negatively charged residues as well as asparagine and methionine are not favored. In Homo sapiens (Human), this protein is ABC-type oligopeptide transporter ABCB9.